The primary structure comprises 113 residues: Prefoldin subunit beta (113 aa).

This sequence belongs to the prefoldin subunit beta family. In terms of assembly, heterohexamer of two alpha and four beta subunits.

The protein resides in the cytoplasm. Its function is as follows. Molecular chaperone capable of stabilizing a range of proteins. Seems to fulfill an ATP-independent, HSP70-like function in archaeal de novo protein folding. The protein is Prefoldin subunit beta of Methanococcus maripaludis (strain C6 / ATCC BAA-1332).